The sequence spans 301 residues: Cilia- and flagella-associated protein 161 (301 aa).

It localises to the cytoplasm. It is found in the cytoskeleton. Its subcellular location is the cilium axoneme. In terms of biological role, microtubule inner protein (MIP) part of the dynein-decorated doublet microtubules (DMTs) in cilia axoneme, which is required for motile cilia beating. The sequence is that of Cilia- and flagella-associated protein 161 from Danio rerio (Zebrafish).